A 535-amino-acid polypeptide reads, in one-letter code: Arylsulfatase G (535 aa).

The signal sequence occupies residues 1 to 18 (MGWLFLKVLFLGVTFLGC). Ca(2+) is bound by residues Asp-44, Asp-45, and Cys-84. Cys-84 functions as the Nucleophile in the catalytic mechanism. Cys-84 carries the post-translational modification 3-oxoalanine (Cys). The N-linked (GlcNAc...) asparagine glycan is linked to Asn-117. A substrate-binding site is contributed by Lys-137. His-139 is an active-site residue. Residue Ser-162 coordinates substrate. N-linked (GlcNAc...) asparagine glycosylation is present at Asn-215. His-251 is a substrate binding site. Ca(2+) contacts are provided by Asp-302 and Asn-303. 2 N-linked (GlcNAc...) asparagine glycosylation sites follow: Asn-356 and Asn-497.

Belongs to the sulfatase family. Requires Ca(2+) as cofactor. N-glycosylated with both high mannose and complex type sugars. In terms of processing, the conversion to 3-oxoalanine (also known as C-formylglycine, FGly), of a serine or cysteine residue in prokaryotes and of a cysteine residue in eukaryotes, is critical for catalytic activity. Post-translationally, the 63-kDa precursor undergoes proteolytic processing in two steps, yielding two fragments in the first step (apparent molecular masses of 44 and 18 kDa). In the second step, the 44-kDa fragment is processed further to the 34- and 10-kDa chains. The 10-kDa chain is a cleavage product of the 44-kDa fragment but linked to the 18-kDa chain through a disulfide bridge.

Its subcellular location is the lysosome. It carries out the reaction an aryl sulfate + H2O = a phenol + sulfate + H(+). It catalyses the reaction Hydrolysis of the 3-sulfate groups of the N-sulfo-D-glucosamine 3-O-sulfate units of heparin.. Functionally, displays arylsulfatase activity with pseudosubstrates at acidic pH, such as p-nitrocatechol sulfate. Catalyzes the hydrolysis of the 3-sulfate groups of the N-sulfo-D-glucosamine 3-O-sulfate units of heparin. The polypeptide is Arylsulfatase G (ARSG) (Canis lupus familiaris (Dog)).